Consider the following 85-residue polypeptide: Large ribosomal subunit protein bL27 (85 aa).

The disordered stretch occupies residues 1 to 20; that stretch reads MAHKKAGGSTRNGRDSEAKR.

It belongs to the bacterial ribosomal protein bL27 family.

The sequence is that of Large ribosomal subunit protein bL27 from Citrobacter koseri (strain ATCC BAA-895 / CDC 4225-83 / SGSC4696).